The sequence spans 595 residues: Inactive glycosyltransferase 25 family member 3 (595 aa).

An N-terminal signal peptide occupies residues 1–22 (MRAARAAPLLQLLLLLGPWLEA). Asn75, Asn153, Asn237, and Asn360 each carry an N-linked (GlcNAc...) asparagine glycan. A disordered region spans residues 548–595 (DTETSSPWDDDSGRLISWSGSQKTLRSPRLDLTGSSGHSLQPQPRDEL). Residues 580–589 (TGSSGHSLQP) are compositionally biased toward polar residues. Residues 592 to 595 (RDEL) carry the Prevents secretion from ER motif.

Belongs to the glycosyltransferase 25 family. As to expression, ubiquitous. Highly expressed in secretory and nervous tissues.

The protein resides in the endoplasmic reticulum lumen. Probable cell adhesion protein involved in leukocyte transmigration across the blood-brain barrier. Does not express any beta-galactosyltransferase activity in vitro. The sequence is that of Inactive glycosyltransferase 25 family member 3 (CERCAM) from Homo sapiens (Human).